A 418-amino-acid chain; its full sequence is Tyrosine--tRNA ligase (418 aa).

L-tyrosine is bound at residue Y39. The 'HIGH' region signature appears at 44 to 53 (CTADSLHVGS). L-tyrosine is bound by residues Y176 and Q180. The 'KMSKS' region signature appears at 236-240 (KMGKT). K239 lines the ATP pocket. The S4 RNA-binding domain maps to 350-416 (LPLAEMMRAT…KKRHALIRVL (67 aa)).

This sequence belongs to the class-I aminoacyl-tRNA synthetase family. TyrS type 1 subfamily. Homodimer.

Its subcellular location is the cytoplasm. It carries out the reaction tRNA(Tyr) + L-tyrosine + ATP = L-tyrosyl-tRNA(Tyr) + AMP + diphosphate + H(+). In terms of biological role, catalyzes the attachment of tyrosine to tRNA(Tyr) in a two-step reaction: tyrosine is first activated by ATP to form Tyr-AMP and then transferred to the acceptor end of tRNA(Tyr). This chain is Tyrosine--tRNA ligase, found in Rhodospirillum rubrum (strain ATCC 11170 / ATH 1.1.1 / DSM 467 / LMG 4362 / NCIMB 8255 / S1).